The following is a 73-amino-acid chain: uncharacterized protein (73 aa).

The protein belongs to the asfivirus I73R family.

The protein resides in the virion. This is an uncharacterized protein from Ornithodoros (relapsing fever ticks).